The sequence spans 465 residues: Apolipoprotein N-acyltransferase (465 aa).

The next 6 helical transmembrane spans lie at 12–32, 49–69, 80–100, 122–142, 161–181, and 189–209; these read AVLG…LSML, ALWG…LHPL, LPVA…LLLL, LLAL…LFWI, WLGS…LWQL, and CAWW…SLSP. The CN hydrolase domain maps to 221-448; it reads WQPAIPTREK…DAVAAAELQR (228 aa). The active-site Proton acceptor is E262. K312 is an active-site residue. C360 serves as the catalytic Nucleophile.

This sequence belongs to the CN hydrolase family. Apolipoprotein N-acyltransferase subfamily.

It localises to the cell inner membrane. The enzyme catalyses N-terminal S-1,2-diacyl-sn-glyceryl-L-cysteinyl-[lipoprotein] + a glycerophospholipid = N-acyl-S-1,2-diacyl-sn-glyceryl-L-cysteinyl-[lipoprotein] + a 2-acyl-sn-glycero-3-phospholipid + H(+). The protein operates within protein modification; lipoprotein biosynthesis (N-acyl transfer). In terms of biological role, catalyzes the phospholipid dependent N-acylation of the N-terminal cysteine of apolipoprotein, the last step in lipoprotein maturation. This chain is Apolipoprotein N-acyltransferase, found in Parasynechococcus marenigrum (strain WH8102).